A 389-amino-acid chain; its full sequence is Succinate--CoA ligase [ADP-forming] subunit beta (389 aa).

One can recognise an ATP-grasp domain in the interval 9 to 244; sequence KEILRKFGVA…LDEEDPAEVE (236 aa). ATP-binding positions include Lys-46, 53-55, Glu-99, Ala-102, and Glu-107; that span reads GRG. Asn-199 and Asp-213 together coordinate Mg(2+). Substrate-binding positions include Asn-264 and 321-323; that span reads GIM.

The protein belongs to the succinate/malate CoA ligase beta subunit family. In terms of assembly, heterotetramer of two alpha and two beta subunits. It depends on Mg(2+) as a cofactor.

It catalyses the reaction succinate + ATP + CoA = succinyl-CoA + ADP + phosphate. The enzyme catalyses GTP + succinate + CoA = succinyl-CoA + GDP + phosphate. The protein operates within carbohydrate metabolism; tricarboxylic acid cycle; succinate from succinyl-CoA (ligase route): step 1/1. Functionally, succinyl-CoA synthetase functions in the citric acid cycle (TCA), coupling the hydrolysis of succinyl-CoA to the synthesis of either ATP or GTP and thus represents the only step of substrate-level phosphorylation in the TCA. The beta subunit provides nucleotide specificity of the enzyme and binds the substrate succinate, while the binding sites for coenzyme A and phosphate are found in the alpha subunit. The chain is Succinate--CoA ligase [ADP-forming] subunit beta from Paraburkholderia phytofirmans (strain DSM 17436 / LMG 22146 / PsJN) (Burkholderia phytofirmans).